Consider the following 308-residue polypeptide: Very-long-chain enoyl-CoA reductase (308 aa).

Residues 1–86 (MKHYEVEIRD…YFRDLGAQIS (86 aa)) lie on the Cytoplasmic side of the membrane. Position 22 is an N6-acetyllysine (K22). Position 58 is a phosphoserine (S58). K60 carries the post-translational modification N6-acetyllysine. A helical membrane pass occupies residues 87-106 (WVTVFLTEYAGPLFIYLLFY). Residues 107–124 (FRVPFIYGRKYDFTSSRH) lie on the Lumenal side of the membrane. A helical membrane pass occupies residues 125–147 (TVVHLACMCHSFHYIKRLLETLF). Residues 148–158 (VHRFSHGTMPL) lie on the Cytoplasmic side of the membrane. A helical membrane pass occupies residues 159–180 (RNIFKNCTYYWGFAAWMAYYIN). Topologically, residues 181 to 189 (HPLYTPPTY) are lumenal. Residues 190-216 (GVQQVKLALAVFVICQLGNFSIHMALR) traverse the membrane as a helical segment. The Cytoplasmic segment spans residues 217–245 (DLRPAGSKTRKIPYPTKNPFTWLFLLVSC). A helical transmembrane segment spans residues 246–262 (PNYTYEVGSWIGFAILT). The Lumenal portion of the chain corresponds to 263–264 (QC). A helical transmembrane segment spans residues 265 to 292 (VPVALFSLVGFTQMTIWAKGKHRSYLKE). The Cytoplasmic segment spans residues 293-308 (FRDYPPLRMPIIPFLL).

This sequence belongs to the steroid 5-alpha reductase family. In terms of assembly, interacts with ELOVL1 and LASS2. Post-translationally, glycosylated.

The protein resides in the endoplasmic reticulum membrane. It carries out the reaction a very-long-chain 2,3-saturated fatty acyl-CoA + NADP(+) = a very-long-chain (2E)-enoyl-CoA + NADPH + H(+). The catalysed reaction is octadecanoyl-CoA + NADP(+) = (2E)-octadecenoyl-CoA + NADPH + H(+). It catalyses the reaction (2E,7Z,10Z,13Z,16Z)-docosapentaenoyl-CoA + NADPH + H(+) = (7Z,10Z,13Z,16Z)-docosatetraenoyl-CoA + NADP(+). The enzyme catalyses (2E,7Z,10Z,13Z,16Z,19Z)-docosahexaenoyl-CoA + NADPH + H(+) = (7Z,10Z,13Z,16Z,19Z)-docosapentaenoyl-CoA + NADP(+). It carries out the reaction (2E,8Z,11Z,14Z)-eicosatetraenoyl-CoA + NADPH + H(+) = (8Z,11Z,14Z)-eicosatrienoyl-CoA + NADP(+). The catalysed reaction is (2E)-hexadecenoyl-CoA + NADPH + H(+) = hexadecanoyl-CoA + NADP(+). It participates in lipid metabolism; fatty acid biosynthesis. It functions in the pathway lipid metabolism; sphingolipid metabolism. Functionally, involved in both the production of very long-chain fatty acids for sphingolipid synthesis and the degradation of the sphingosine moiety in sphingolipids through the sphingosine 1-phosphate metabolic pathway. Catalyzes the last of the four reactions of the long-chain fatty acids elongation cycle. This endoplasmic reticulum-bound enzymatic process, allows the addition of 2 carbons to the chain of long- and very long-chain fatty acids/VLCFAs per cycle. This enzyme reduces the trans-2,3-enoyl-CoA fatty acid intermediate to an acyl-CoA that can be further elongated by entering a new cycle of elongation. Thereby, it participates in the production of VLCFAs of different chain lengths that are involved in multiple biological processes as precursors of membrane lipids and lipid mediators. Catalyzes the saturation step of the sphingosine 1-phosphate metabolic pathway, the conversion of trans-2-hexadecenoyl-CoA to palmitoyl-CoA. The chain is Very-long-chain enoyl-CoA reductase (Tecr) from Mus musculus (Mouse).